The following is a 423-amino-acid chain: Glucose-1-phosphate adenylyltransferase (423 aa).

Alpha-D-glucose 1-phosphate contacts are provided by residues Tyr-108, Gly-173, 188-189, and Ser-207; that span reads EK.

Belongs to the bacterial/plant glucose-1-phosphate adenylyltransferase family. In terms of assembly, homotetramer.

It carries out the reaction alpha-D-glucose 1-phosphate + ATP + H(+) = ADP-alpha-D-glucose + diphosphate. The protein operates within glycan biosynthesis; glycogen biosynthesis. Its function is as follows. Involved in the biosynthesis of ADP-glucose, a building block required for the elongation reactions to produce glycogen. Catalyzes the reaction between ATP and alpha-D-glucose 1-phosphate (G1P) to produce pyrophosphate and ADP-Glc. The chain is Glucose-1-phosphate adenylyltransferase from Francisella tularensis subsp. mediasiatica (strain FSC147).